The following is a 363-amino-acid chain: Peptide chain release factor 1 (363 aa).

N5-methylglutamine is present on Gln237.

It belongs to the prokaryotic/mitochondrial release factor family. In terms of processing, methylated by PrmC. Methylation increases the termination efficiency of RF1.

The protein resides in the cytoplasm. Functionally, peptide chain release factor 1 directs the termination of translation in response to the peptide chain termination codons UAG and UAA. This Mycoplasma capricolum subsp. capricolum (strain California kid / ATCC 27343 / NCTC 10154) protein is Peptide chain release factor 1 (prfA).